The following is a 100-amino-acid chain: Urease subunit gamma (100 aa).

Belongs to the urease gamma subunit family. As to quaternary structure, heterotrimer of UreA (gamma), UreB (beta) and UreC (alpha) subunits. Three heterotrimers associate to form the active enzyme.

The protein resides in the cytoplasm. The catalysed reaction is urea + 2 H2O + H(+) = hydrogencarbonate + 2 NH4(+). It participates in nitrogen metabolism; urea degradation; CO(2) and NH(3) from urea (urease route): step 1/1. In Mycobacterium ulcerans (strain Agy99), this protein is Urease subunit gamma.